We begin with the raw amino-acid sequence, 146 residues long: Large ribosomal subunit protein uL23B (146 aa).

Residues 1–22 (MAPSSNKVGKAIQAKKAVVKGS) are disordered.

Belongs to the universal ribosomal protein uL23 family.

Functionally, this protein binds to a specific region on the 26S rRNA. The chain is Large ribosomal subunit protein uL23B (rpl-23A.2) from Caenorhabditis elegans.